The primary structure comprises 489 residues: Probable anthranilate synthase component 1 (489 aa).

Residues S54 and 262 to 264 (PYM) each bind L-tryptophan. A chorismate-binding site is contributed by 297 to 298 (GT). Residue E324 participates in Mg(2+) binding. 2 positions are modified to phosphoserine: S390 and S392. Chorismate-binding positions include Y412, R433, 447–449 (GGG), and G449. Mg(2+) is bound at residue E462. Residue S488 is modified to Phosphoserine.

The protein belongs to the anthranilate synthase component I family. As to quaternary structure, tetramer of two components I and two components II. The cofactor is Mg(2+).

The enzyme catalyses chorismate + L-glutamine = anthranilate + pyruvate + L-glutamate + H(+). The protein operates within amino-acid biosynthesis; L-tryptophan biosynthesis; L-tryptophan from chorismate: step 1/5. The sequence is that of Probable anthranilate synthase component 1 (trp3) from Schizosaccharomyces pombe (strain 972 / ATCC 24843) (Fission yeast).